Reading from the N-terminus, the 208-residue chain is Probable hydrolase YcaC (208 aa).

Residue Cys-118 is part of the active site.

Homooctamer composed of two tetrameric rings.

This is Probable hydrolase YcaC (ycaC) from Escherichia coli (strain K12).